Here is a 210-residue protein sequence, read N- to C-terminus: MSLPAGVQRRSFGDEDGVLATRGEPAYGEPVVDGWRRWDAHRSKLGATFELGLDTGLSGGDAVLYLGAANGTTVSHVADFAGPTYAVEFAPRPVTDLLAVADSRERLFPLLKDARAPETYAHVVESGVDAIVQDVATRGQADVALSNRQFLADDGRLVAALKARSEDVTADPAAVFEDLLGRLRDGYEVRATARMEPFHEDHLAVVATPR.

Residues 72–73 (TT), 88–89 (EF), 113–114 (DA), and 134–137 (DVAT) each bind S-adenosyl-L-methionine.

It belongs to the methyltransferase superfamily. Fibrillarin family. As to quaternary structure, interacts with nop5. Component of box C/D small ribonucleoprotein (sRNP) particles that contain rpl7ae, FlpA and nop5, plus a guide RNA.

Functionally, involved in pre-rRNA and tRNA processing. Utilizes the methyl donor S-adenosyl-L-methionine to catalyze the site-specific 2'-hydroxyl methylation of ribose moieties in rRNA and tRNA. Site specificity is provided by a guide RNA that base pairs with the substrate. Methylation occurs at a characteristic distance from the sequence involved in base pairing with the guide RNA. The polypeptide is Fibrillarin-like rRNA/tRNA 2'-O-methyltransferase (Halobacterium salinarum (strain ATCC 29341 / DSM 671 / R1)).